Reading from the N-terminus, the 167-residue chain is Ubiquitin-fold modifier-conjugating enzyme 1 (167 aa).

Catalysis depends on Cys-116, which acts as the Glycyl thioester intermediate. A Glycyl lysine isopeptide (Lys-Gly) (interchain with G-Cter in UFM1) cross-link involves residue Lys-122.

It belongs to the ubiquitin-conjugating enzyme family. UFC1 subfamily. In terms of assembly, interacts with UBA5 (via C-terminus). Interacts with UFL1. Interacts with UFM1. Interacts with KIRREL3. Post-translationally, ufmylated at Lys-122. Deufmylated by UFSP1.

Its function is as follows. E2-like enzyme which specifically catalyzes the second step in ufmylation. Accepts the ubiquitin-like modifier UFM1 from the E1 enzyme UBA5 and forms an intermediate with UFM1 via a thioester linkage. Ufmylation is involved in various processes, such as ribosome recycling, response to DNA damage, interferon response or reticulophagy (also called ER-phagy). The chain is Ubiquitin-fold modifier-conjugating enzyme 1 from Rattus norvegicus (Rat).